The chain runs to 1009 residues: Protein-tyrosine kinase 2-beta (1009 aa).

In terms of domain architecture, FERM spans 39-359 (RILKVCFYSN…GYCRLQGEHQ (321 aa)). Phosphoserine is present on residues serine 361, serine 375, and serine 399. Position 402 is a phosphotyrosine; by autocatalysis (tyrosine 402). The Protein kinase domain maps to 425-683 (VVLNRILGEG…ELVCSLSDVY (259 aa)). ATP is bound by residues 431–439 (LGEGFFGEV), lysine 457, and 503–509 (ELYPYGE). Residue aspartate 549 is the Proton acceptor of the active site. Tyrosine 579 carries the post-translational modification Phosphotyrosine. Tyrosine 580 is modified (phosphotyrosine; by SRC, FYN and LCK). The segment at 701-725 (TPKILEPTAFQEPPPKPSRPKYRPP) is disordered. Residues 712-725 (EPPPKPSRPKYRPP) are compositionally biased toward pro residues. Tyrosine 722 is subject to Phosphotyrosine. The residue at position 762 (serine 762) is a Phosphoserine. Residue threonine 765 is modified to Phosphothreonine. Residues 801–1009 (KVKMRQILDK…LANLAHPPAE (209 aa)) form an interaction with TGFB1I1 region. 2 positions are modified to phosphotyrosine: tyrosine 819 and tyrosine 834. Serine 839 carries the post-translational modification Phosphoserine. Threonine 842 carries the phosphothreonine modification. At tyrosine 849 the chain carries Phosphotyrosine. A Phosphoserine modification is found at serine 866. The segment at 868-1009 (QPTANLDRTD…LANLAHPPAE (142 aa)) is focal adhesion targeting (FAT). Tyrosine 881 carries the post-translational modification Phosphotyrosine; by SRC.

The protein belongs to the protein kinase superfamily. Tyr protein kinase family. FAK subfamily. Homodimer, or homooligomer. Interacts with SIRPA and SH2D3C. Interacts with ARHGAP10. Interacts with DLG4. Interacts with KCNA2. Interacts with NPHP1, ASAP1, ASAP2, ARHGAP26, SKAP2 and TGFB1I1. The Tyr-402 phosphorylated form interacts with SRC (via SH2 domain) and SRC family members. Forms a signaling complex with EPHA1, LCK and phosphatidylinositol 3-kinase; upon activation by EFNA1. Interacts with GRB2 (via SH2 domain). Interacts with P53/TP53 and MDM2. Interacts with MYLK. Interacts with BCAR1. Interacts with PDPK1. Interacts (hypophosphorylated) with PXN. Interacts with RB1CC1. Interacts with RHOU. Interacts with VAV1. Interacts with LPXN and PTPN12. In terms of processing, phosphorylated on tyrosine residues in response to various stimuli that elevate the intracellular calcium concentration; this activation is indirect and may be mediated by production of reactive oxygen species (ROS). Tyr-402 is the major autophosphorylation site, but other kinases can also phosphorylate Tyr-402. Autophosphorylation occurs in trans, i.e. one subunit of the dimeric receptor phosphorylates tyrosine residues on the other subunit. Phosphorylation at Tyr-402 promotes interaction with SRC and SRC family members, leading to phosphorylation at Tyr-579; Tyr-580 and Tyr-881. Phosphorylation at Tyr-881 is important for interaction with GRB2. Phosphorylated on tyrosine residues upon activation of FGR and PKC. Recruitment by NPHP1 to cell matrix adhesions initiates Tyr-402 phosphorylation. In monocytes, adherence to substrata is required for tyrosine phosphorylation and kinase activation. Angiotensin II, thapsigargin and L-alpha-lysophosphatidic acid (LPA) also induce autophosphorylation and increase kinase activity. Phosphorylation by MYLK promotes ITGB2 activation and is thus essential to trigger neutrophil transmigration during lung injury. Dephosphorylated by PTPN12. As to expression, most abundant in the brain, with highest levels in amygdala and hippocampus. Low levels in kidney (at protein level). Also expressed in spleen and lymphocytes.

It is found in the cytoplasm. Its subcellular location is the perinuclear region. The protein resides in the cell membrane. It localises to the cell junction. The protein localises to the focal adhesion. It is found in the cell projection. Its subcellular location is the lamellipodium. The protein resides in the cell cortex. It localises to the nucleus. The catalysed reaction is L-tyrosyl-[protein] + ATP = O-phospho-L-tyrosyl-[protein] + ADP + H(+). Activated in response to stimuli that lead to increased intracellular Ca(2+) levels; this activation is indirect and may be mediated by calcium-mediated production of reactive oxygen species (ROS). Activated by autophosphorylation at Tyr-402; this creates a binding site for SRC family kinases and leads to phosphorylation at additional tyrosine residues. Phosphorylation at Tyr-402, Tyr-579 and Tyr-580 is required for optimal kinase activity. Inhibited by PF-562,271, BIRB796, PF-4618433 and by PF-431396, PF-2318841 and their derivatives. Inhibited by sulfoximine-substituted trifluoromethylpyrimidines. Inhibited by 4-amino and 5-aryl substituted pyridinone compounds. Non-receptor protein-tyrosine kinase that regulates reorganization of the actin cytoskeleton, cell polarization, cell migration, adhesion, spreading and bone remodeling. Plays a role in the regulation of the humoral immune response, and is required for normal levels of marginal B-cells in the spleen and normal migration of splenic B-cells. Required for normal macrophage polarization and migration towards sites of inflammation. Regulates cytoskeleton rearrangement and cell spreading in T-cells, and contributes to the regulation of T-cell responses. Promotes osteoclastic bone resorption; this requires both PTK2B/PYK2 and SRC. May inhibit differentiation and activity of osteoprogenitor cells. Functions in signaling downstream of integrin and collagen receptors, immune receptors, G-protein coupled receptors (GPCR), cytokine, chemokine and growth factor receptors, and mediates responses to cellular stress. Forms multisubunit signaling complexes with SRC and SRC family members upon activation; this leads to the phosphorylation of additional tyrosine residues, creating binding sites for scaffold proteins, effectors and substrates. Regulates numerous signaling pathways. Promotes activation of phosphatidylinositol 3-kinase and of the AKT1 signaling cascade. Promotes activation of NOS3. Regulates production of the cellular messenger cGMP. Promotes activation of the MAP kinase signaling cascade, including activation of MAPK1/ERK2, MAPK3/ERK1 and MAPK8/JNK1. Promotes activation of Rho family GTPases, such as RHOA and RAC1. Recruits the ubiquitin ligase MDM2 to P53/TP53 in the nucleus, and thereby regulates P53/TP53 activity, P53/TP53 ubiquitination and proteasomal degradation. Acts as a scaffold, binding to both PDPK1 and SRC, thereby allowing SRC to phosphorylate PDPK1 at 'Tyr-9, 'Tyr-373', and 'Tyr-376'. Promotes phosphorylation of NMDA receptors by SRC family members, and thereby contributes to the regulation of NMDA receptor ion channel activity and intracellular Ca(2+) levels. May also regulate potassium ion transport by phosphorylation of potassium channel subunits. Phosphorylates SRC; this increases SRC kinase activity. Phosphorylates ASAP1, NPHP1, KCNA2 and SHC1. Promotes phosphorylation of ASAP2, RHOU and PXN; this requires both SRC and PTK2/PYK2. In Homo sapiens (Human), this protein is Protein-tyrosine kinase 2-beta (PTK2B).